A 105-amino-acid chain; its full sequence is uncharacterized protein (105 aa).

This is an uncharacterized protein from Saccharolobus islandicus (Sulfolobus islandicus).